Consider the following 567-residue polypeptide: MTFNGWLQILIYIGILLLLVKPLGGYMTRVFTGERTLLSYVLGPLERGLYRIAGTDEREEQHWTTYSISMLLFSLAGFLMLYFLQRFQASLPYNPAGMTSIGPELSFNNAASFVTNTNWQNYGGESTMSYLVQMAGFTVQNFVSAATGIALAIALIRAFSRASGKAIGNFWVDLTRATLYVLLPACIVMTLVFVYLGVPQTLGPYVNATTLEGAQQTIAVGPVASQLAIKMLGTNGGGFFNANSAHPFENPDAISNLIQMLAIFAIGAALTNVFGRMVGNQRQGWAILAAMGTLFIAGVIVTYWAEAAGNPLVHALGVQGGNMEGKEVRFGITMSSLFAVITTAASCGAVNGMLGSFTAIGGMIPLINLQLGEVIVGGVGAGFYGILMFVIIAIFVSGLMVGRTPEYLGKKIEAKEVKMAMLAVLCLPAGMLIFTAISVVLPSAVASIGNPGPHGFSEILYAYSSAAANNGSAFAGLSANTTWYNITLGVVMLIGRFLVIVPALAIAGSLIAKKTVPASAGTFPTDGPLFVGLLVGTILIVGGLTFFPALALGPIVEHLSMIAGQAF.

Transmembrane regions (helical) follow at residues 5 to 25 (GWLQ…PLGG), 64 to 84 (TTYS…LYFL), 136 to 156 (GFTV…IALI), 179 to 199 (LYVL…LGVP), 254 to 274 (ISNL…TNVF), 285 to 305 (WAIL…TYWA), 328 to 350 (VRFG…CGAV), 375 to 395 (IVGG…IAIF), 421 to 441 (MLAV…SVVL), 459 to 481 (ILYA…SANT), 486 to 506 (ITLG…ALAI), and 529 to 549 (LFVG…FFPA).

Belongs to the KdpA family. In terms of assembly, the system is composed of three essential subunits: KdpA, KdpB and KdpC.

The protein resides in the cell inner membrane. In terms of biological role, part of the high-affinity ATP-driven potassium transport (or Kdp) system, which catalyzes the hydrolysis of ATP coupled with the electrogenic transport of potassium into the cytoplasm. This subunit binds the periplasmic potassium ions and delivers the ions to the membrane domain of KdpB through an intramembrane tunnel. In Rhizobium rhizogenes (strain K84 / ATCC BAA-868) (Agrobacterium radiobacter), this protein is Potassium-transporting ATPase potassium-binding subunit.